The primary structure comprises 148 residues: UPF0179 protein Mevan_0979 (148 aa).

Belongs to the UPF0179 family.

This chain is UPF0179 protein Mevan_0979, found in Methanococcus vannielii (strain ATCC 35089 / DSM 1224 / JCM 13029 / OCM 148 / SB).